An 82-amino-acid chain; its full sequence is uncharacterized protein (82 aa).

Low complexity predominate over residues 29–38 (TATKSTSSGS). The interval 29–64 (TATKSTSSGSVPSFFTESTSTPLNQSKTNTSTLNKS) is disordered. Residues 39–50 (VPSFFTESTSTP) show a composition bias toward polar residues. A compositionally biased stretch (low complexity) spans 51–64 (LNQSKTNTSTLNKS).

This is an uncharacterized protein from Dictyostelium discoideum (Social amoeba).